The chain runs to 131 residues: Small ribosomal subunit protein bS6 (131 aa).

A disordered region spans residues 92 to 131 (RVDEHKDGPSVQMQKRDERERGDRGDRGERRERRDRDDRN).

The protein belongs to the bacterial ribosomal protein bS6 family.

Functionally, binds together with bS18 to 16S ribosomal RNA. The protein is Small ribosomal subunit protein bS6 of Paracoccus denitrificans (strain Pd 1222).